Consider the following 219-residue polypeptide: 7-cyano-7-deazaguanine synthase (219 aa).

10-20 contributes to the ATP binding site; sequence FSGGQDSTTCL. Zn(2+) contacts are provided by Cys188, Cys196, Cys199, and Cys202.

It belongs to the QueC family. It depends on Zn(2+) as a cofactor.

The catalysed reaction is 7-carboxy-7-deazaguanine + NH4(+) + ATP = 7-cyano-7-deazaguanine + ADP + phosphate + H2O + H(+). The protein operates within purine metabolism; 7-cyano-7-deazaguanine biosynthesis. In terms of biological role, catalyzes the ATP-dependent conversion of 7-carboxy-7-deazaguanine (CDG) to 7-cyano-7-deazaguanine (preQ(0)). This Neisseria meningitidis serogroup A / serotype 4A (strain DSM 15465 / Z2491) protein is 7-cyano-7-deazaguanine synthase.